We begin with the raw amino-acid sequence, 29 residues long: Cytochrome b6-f complex subunit 8 (29 aa).

A helical transmembrane segment spans residues 3 to 23 (ILTLGWVSLLVVFTWSIAMVV).

The protein belongs to the PetN family. The 4 large subunits of the cytochrome b6-f complex are cytochrome b6, subunit IV (17 kDa polypeptide, PetD), cytochrome f and the Rieske protein, while the 4 small subunits are PetG, PetL, PetM and PetN. The complex functions as a dimer.

It localises to the cellular thylakoid membrane. Functionally, component of the cytochrome b6-f complex, which mediates electron transfer between photosystem II (PSII) and photosystem I (PSI), cyclic electron flow around PSI, and state transitions. This is Cytochrome b6-f complex subunit 8 from Nostoc punctiforme (strain ATCC 29133 / PCC 73102).